A 208-amino-acid polypeptide reads, in one-letter code: Ribosomal RNA small subunit methyltransferase J (208 aa).

S-adenosyl-L-methionine is bound by residues 54-55, 70-71, and D122; these read RD and ER.

This sequence belongs to the methyltransferase superfamily. RsmJ family.

Its subcellular location is the cytoplasm. It carries out the reaction guanosine(1516) in 16S rRNA + S-adenosyl-L-methionine = N(2)-methylguanosine(1516) in 16S rRNA + S-adenosyl-L-homocysteine + H(+). Functionally, specifically methylates the guanosine in position 1516 of 16S rRNA. The protein is Ribosomal RNA small subunit methyltransferase J of Agrobacterium fabrum (strain C58 / ATCC 33970) (Agrobacterium tumefaciens (strain C58)).